The sequence spans 641 residues: Probable licABCH operon regulator (641 aa).

PRD domains lie at 184-289 and 296-403; these read ILPK…TQSQ and SIEE…KKTE. Residues H219, H278, H333, and H392 each carry the phosphohistidine; by HPr modification. The PTS EIIB type-2 domain occupies 407-498; that stretch reads KRCIIVCASG…ILSDEKEKAN (92 aa). C413 is modified (phosphocysteine; by EIIA). In terms of domain architecture, PTS EIIA type-2 spans 499–638; the sequence is RYLKKELVFF…QELSDVFDQK (140 aa). Position 559 is a phosphohistidine; by EIIB (H559).

This sequence belongs to the transcriptional antiterminator BglG family.

Its activity is regulated as follows. The regulatory activity of LicR is modulated by phosphorylation and dephosphorylation of the various LicR domains. It becomes activated via phosphoryl group transfer from PEP, EI and HPr on the two conserved histidine residues in the PRD 2 domain, whereas phosphorylation of the EIIA-like domain on His-559 by the PTS EIIB component LicB inactivates LicR. Functionally, positive regulator of the licABCH operon. The protein is Probable licABCH operon regulator (licR) of Bacillus subtilis (strain 168).